A 576-amino-acid polypeptide reads, in one-letter code: Arginine--tRNA ligase (576 aa).

Positions 122–132 match the 'HIGH' region motif; the sequence is PNVAKQMHVGH.

It belongs to the class-I aminoacyl-tRNA synthetase family. As to quaternary structure, monomer.

The protein resides in the cytoplasm. It carries out the reaction tRNA(Arg) + L-arginine + ATP = L-arginyl-tRNA(Arg) + AMP + diphosphate. The protein is Arginine--tRNA ligase of Yersinia pseudotuberculosis serotype IB (strain PB1/+).